The chain runs to 756 residues: Glutathione biosynthesis bifunctional protein GshAB (756 aa).

Positions 1-338 (MNYRELMQKK…TGDIFNEQVA (338 aa)) are glutamate--cysteine ligase. The 259-residue stretch at 493–751 (KKILSAAGFH…LTMDVLKLLY (259 aa)) folds into the ATP-grasp domain. An ATP-binding site is contributed by 520 to 578 (LRYANKAFVVKPKSTNYGLGITIFKEGASLEDFTEALRIAFKEDTAVLIEEFLPGTEYR). Residues aspartate 700, glutamate 721, and asparagine 723 each contribute to the Mg(2+) site. Aspartate 700, glutamate 721, and asparagine 723 together coordinate Mn(2+).

The protein in the N-terminal section; belongs to the glutamate--cysteine ligase type 1 family. Type 2 subfamily. Monomer. The cofactor is Mg(2+). It depends on Mn(2+) as a cofactor.

It catalyses the reaction L-cysteine + L-glutamate + ATP = gamma-L-glutamyl-L-cysteine + ADP + phosphate + H(+). The catalysed reaction is gamma-L-glutamyl-L-cysteine + glycine + ATP = glutathione + ADP + phosphate + H(+). It participates in sulfur metabolism; glutathione biosynthesis; glutathione from L-cysteine and L-glutamate: step 1/2. It functions in the pathway sulfur metabolism; glutathione biosynthesis; glutathione from L-cysteine and L-glutamate: step 2/2. Functionally, synthesizes glutathione from L-glutamate and L-cysteine via gamma-L-glutamyl-L-cysteine. This Enterococcus faecalis (strain ATCC 700802 / V583) protein is Glutathione biosynthesis bifunctional protein GshAB.